The chain runs to 3726 residues: Histone-lysine N-methyltransferase trithorax (3726 aa).

4 disordered regions span residues 1-247 (MGRS…ATTS), 321-352 (QLNSPVVDNPSPSPPIASGSTPSVEGGIGVGG), 371-429 (NEVA…TAKQ), and 509-624 (AGAS…RSTR). Low complexity-rich tracts occupy residues 31–53 (PAEPQQPAPESQQPSGSGSGSSA) and 71–101 (GGASISGNTASSSAGSGNSGNGSSSGSSTGS). Residues 102 to 115 (GSSGSGSTNGGSVN) show a composition bias toward gly residues. Residues 126–143 (LDKEAVTKDQNGDGDKTR) are compositionally biased toward basic and acidic residues. Residues 147–205 (SSAPSGKLSAAASGKALSKSSRTFSASTSVTSSGRSSGSSPDGNSGASSDGASSGISCG) are compositionally biased toward low complexity. Positions 206 to 215 (KSTAKSTEAS) are enriched in polar residues. Residues 222–247 (TTGAGTCSSAKSSKASSGTTSEATTS) show a composition bias toward low complexity. Composition is skewed to low complexity over residues 384 to 402 (AAANGAASGKGSASNGPPA) and 509 to 525 (AGASSSSSNQESGSSSN). The segment covering 553–586 (PEDQNNAEDDEMDDDDDDEEAEEDDENEDDNDEA) has biased composition (acidic residues). Positions 587–610 (VSEKSAETEKSAGADERDPDEKQL) are enriched in basic and acidic residues. The nuclear receptor DNA-binding region spans 759–884 (PSACSICSAV…PGMRGEAAAR (126 aa)). 4 disordered regions span residues 915–937 (TSVKWKSSGDSTSALTSIKPNPL), 981–1049 (LTKK…SHGV), 1115–1184 (VPSA…SSAK), and 1208–1231 (DIATSSSVTQSSNQTQGRKTKEHR). A compositionally biased stretch (polar residues) spans 918 to 937 (KWKSSGDSTSALTSIKPNPL). Basic and acidic residues predominate over residues 986-1000 (SKQEKEKVKESEQSE). Low complexity predominate over residues 1031–1041 (PQTSTTTQPSA). Residues 1123–1132 (SPEKPTHIVT) are compositionally biased toward basic and acidic residues. Low complexity-rich tracts occupy residues 1173–1183 (GTASAAGGSSA) and 1211–1223 (TSSSVTQSSNQTQ). 3 consecutive PHD-type zinc fingers follow at residues 1266–1347 (RALC…CTVC), 1348–1393 (YTCN…CLKC), and 1421–1482 (GNFC…CARR). The 168-residue stretch at 1496–1663 (AVMEEFKASL…SEQFPWFQNE (168 aa)) folds into the Bromo domain. The disordered stretch occupies residues 1573 to 1592 (FKDQQQQQQQRNANMNKPRV). The C2HC pre-PHD-type zinc-finger motif lies at 1734-1774 (TRMCLFCRKSGEGLSGEEARLLYCGHDCWVHTNCAMWSAEV). Residues 1795–1842 (IKCTVCGNRGATVGCNVRSCGEHYHYPCARSIDCAFLTDKSMYCPAHA) form a PHD-type 4 zinc finger. One can recognise an FYR N-terminal domain in the interval 1884 to 1941 (RVQFHIGSLEVRQLGAIVPRFSDSYEAVVPINFLCSRLYWSSKEPWKIVEYTVRTTIQ). 7 disordered regions span residues 1991-2019 (GGTDWSGEFPNPNSCVPPDENTEEEPQQQ), 2068-2110 (TQAM…WPAS), 2283-2302 (CSPTMSSNETESDVSGQGMT), 2649-2669 (GGGADGNQPGSNQQPLILGGT), 2866-2894 (SNLKQSQVKGKAASGTGTTCGAPPSIASK), 3029-3096 (QHFS…PTPP), and 3347-3381 (RKEEQRTVSQEQEQSKAAIVPTAAAPEPPQPIQEP). The span at 2074 to 2087 (NQAQNQNQQAGGAN) shows a compositional bias: low complexity. Low complexity predominate over residues 3032–3043 (STSSSSSSSNCS). A compositionally biased stretch (polar residues) spans 3044–3057 (LPTNVVNPMQQQAP). The 85-residue stretch at 3386 to 3470 (GPHLLYEIQS…EKCSKYTPKY (85 aa)) folds into the FYR C-terminal domain. Residues 3588 to 3704 (DYVGVFRSHI…QGEELTYDYK (117 aa)) form the SET domain. 2 residues coordinate S-adenosyl-L-methionine: His3598 and Arg3600. Cys3641 carries the post-translational modification S-methylcysteine; by autocatalysis. Residues Tyr3642 and 3665–3666 (NH) each bind S-adenosyl-L-methionine. Zn(2+) contacts are provided by Cys3668, Cys3714, Cys3716, and Cys3721. The Post-SET domain occupies 3710–3726 (EKIPCSCGSKRCRKYLN).

It belongs to the class V-like SAM-binding methyltransferase superfamily. Histone-lysine methyltransferase family. TRX/MLL subfamily. In terms of assembly, interacts (via SET domain) with ash1 (via SET domain). Interacts with Nup98. In terms of tissue distribution, maternal isoforms are expressed in syncytial blastoderm, confined to the ventral region fated to become mesoderm. An additional broad domain of expression arises during cellularization and is quickly resolved into four pair-rule-like stripes in the posterior half of the embryo.

Its subcellular location is the nucleus. It is found in the chromosome. It carries out the reaction L-lysyl(9)-[histone H3] + 3 S-adenosyl-L-methionine = N(6),N(6),N(6)-trimethyl-L-lysyl(9)-[histone H3] + 3 S-adenosyl-L-homocysteine + 3 H(+). The enzyme catalyses L-cysteinyl-[protein] + S-adenosyl-L-methionine = S-methyl-L-cysteinyl-[protein] + S-adenosyl-L-homocysteine + H(+). Functionally, histone methyltransferase that methylates 'Lys-4' of histone H3 (H3K4me). H3K4me represents a specific tag for epigenetic transcriptional activation. Functions in segment determination through interaction with genes of bithorax (BX-C) and antennapedia (ANT-C) complexes. Acts as an activator of BX-C. Involved in the very early regulation of homeotic genes expressed only in the posterior region of the embryo. Also has auto-methylation activity on Cys-3641. In Drosophila melanogaster (Fruit fly), this protein is Histone-lysine N-methyltransferase trithorax.